A 499-amino-acid chain; its full sequence is ADP,ATP carrier protein 5 (499 aa).

11 helical membrane-spanning segments follow: residues L25 to L45, I61 to Y81, I93 to Y113, Y148 to W168, F183 to M203, I223 to L243, L286 to V306, L327 to M347, A356 to F376, I380 to G400, and S468 to V488.

Belongs to the ADP/ATP translocase tlc family.

It is found in the cell membrane. Provides the rickettsial cell with host ATP in exchange for rickettsial ADP. This is an obligate exchange system. This energy acquiring activity is an important component of rickettsial parasitism. This is ADP,ATP carrier protein 5 (tlcE) from Rickettsia felis (strain ATCC VR-1525 / URRWXCal2) (Rickettsia azadi).